A 202-amino-acid polypeptide reads, in one-letter code: ATP-dependent Clp protease proteolytic subunit (202 aa).

Residue Ser-101 is the Nucleophile of the active site. His-126 is an active-site residue.

The protein belongs to the peptidase S14 family. In terms of assembly, component of the chloroplastic Clp protease core complex.

It localises to the plastid. It is found in the chloroplast stroma. It catalyses the reaction Hydrolysis of proteins to small peptides in the presence of ATP and magnesium. alpha-casein is the usual test substrate. In the absence of ATP, only oligopeptides shorter than five residues are hydrolyzed (such as succinyl-Leu-Tyr-|-NHMec, and Leu-Tyr-Leu-|-Tyr-Trp, in which cleavage of the -Tyr-|-Leu- and -Tyr-|-Trp bonds also occurs).. Cleaves peptides in various proteins in a process that requires ATP hydrolysis. Has a chymotrypsin-like activity. Plays a major role in the degradation of misfolded proteins. The polypeptide is ATP-dependent Clp protease proteolytic subunit (Platanus occidentalis (Sycamore)).